A 1015-amino-acid polypeptide reads, in one-letter code: DExH-box ATP-dependent RNA helicase DExH8 (1015 aa).

The Helicase ATP-binding domain occupies 36-197; it reads IDKILENRVT…FKELGRGERV (162 aa). Residue 49-56 participates in ATP binding; the sequence is GEPGCGKS. The DEVH box signature appears at 144-147; it reads DEVH. Positions 254-419 constitute a Helicase C-terminal domain; it reads LIHDLILYIH…KLSLRQQVLH (166 aa). 2 consecutive C3H1-type zinc fingers follow at residues 727–753 and 754–782; these read YGEA…THTL and QSTR…HAMR.

The protein belongs to the DExH box helicase family.

It catalyses the reaction ATP + H2O = ADP + phosphate + H(+). This is DExH-box ATP-dependent RNA helicase DExH8 from Arabidopsis thaliana (Mouse-ear cress).